We begin with the raw amino-acid sequence, 145 residues long: MGRRASREIAMKLIYQLEIQKDSREEQINNTLEQYDLNENDREYILDVVKGVFKNQEEIDGTIEKFSKGWKLSRISKVDLAILRLAIYEMCHRDDIPFTVAINEAVELAKNYSGEESGSFINGILGKVVKVKLMSADGNENRDEE.

Belongs to the NusB family.

In terms of biological role, involved in transcription antitermination. Required for transcription of ribosomal RNA (rRNA) genes. Binds specifically to the boxA antiterminator sequence of the ribosomal RNA (rrn) operons. This chain is Transcription antitermination protein NusB, found in Acetivibrio thermocellus (strain ATCC 27405 / DSM 1237 / JCM 9322 / NBRC 103400 / NCIMB 10682 / NRRL B-4536 / VPI 7372) (Clostridium thermocellum).